A 336-amino-acid chain; its full sequence is CENP-A histone chaperone scm3 (336 aa).

The interval 243–269 (RRRNPLLSSPKTPLRRSFSKSKVRNSN) is disordered. The span at 255-269 (PLRRSFSKSKVRNSN) shows a compositional bias: basic residues.

It is found in the cytoplasm. The protein resides in the nucleus. Centromeric protein that plays a central role in the incorporation and maintenance of histone H3-like variant CENPA at centromeres. The chain is CENP-A histone chaperone scm3 from Schizosaccharomyces pombe (strain 972 / ATCC 24843) (Fission yeast).